The following is a 293-amino-acid chain: 4-hydroxy-tetrahydrodipicolinate synthase (293 aa).

Threonine 45 contributes to the pyruvate binding site. Tyrosine 133 acts as the Proton donor/acceptor in catalysis. Lysine 161 acts as the Schiff-base intermediate with substrate in catalysis. Isoleucine 203 lines the pyruvate pocket.

It belongs to the DapA family. As to quaternary structure, homotetramer; dimer of dimers.

The protein resides in the cytoplasm. The catalysed reaction is L-aspartate 4-semialdehyde + pyruvate = (2S,4S)-4-hydroxy-2,3,4,5-tetrahydrodipicolinate + H2O + H(+). It participates in amino-acid biosynthesis; L-lysine biosynthesis via DAP pathway; (S)-tetrahydrodipicolinate from L-aspartate: step 3/4. In terms of biological role, catalyzes the condensation of (S)-aspartate-beta-semialdehyde [(S)-ASA] and pyruvate to 4-hydroxy-tetrahydrodipicolinate (HTPA). This Aliivibrio fischeri (strain MJ11) (Vibrio fischeri) protein is 4-hydroxy-tetrahydrodipicolinate synthase.